The following is a 319-amino-acid chain: D-alanine--D-alanine ligase (319 aa).

In terms of domain architecture, ATP-grasp spans Lys109–Gln313. Residue Pro139–Thr194 participates in ATP binding. Mg(2+)-binding residues include Asp266, Glu280, and Asn282.

It belongs to the D-alanine--D-alanine ligase family. Mg(2+) is required as a cofactor. Requires Mn(2+) as cofactor.

Its subcellular location is the cytoplasm. The enzyme catalyses 2 D-alanine + ATP = D-alanyl-D-alanine + ADP + phosphate + H(+). The protein operates within cell wall biogenesis; peptidoglycan biosynthesis. Cell wall formation. The polypeptide is D-alanine--D-alanine ligase (Methylibium petroleiphilum (strain ATCC BAA-1232 / LMG 22953 / PM1)).